We begin with the raw amino-acid sequence, 119 residues long: Large ribosomal subunit protein bL20 (119 aa).

The protein belongs to the bacterial ribosomal protein bL20 family.

Binds directly to 23S ribosomal RNA and is necessary for the in vitro assembly process of the 50S ribosomal subunit. It is not involved in the protein synthesizing functions of that subunit. The chain is Large ribosomal subunit protein bL20 from Caldanaerobacter subterraneus subsp. tengcongensis (strain DSM 15242 / JCM 11007 / NBRC 100824 / MB4) (Thermoanaerobacter tengcongensis).